The primary structure comprises 150 residues: MTQAVLVLDQRLAARADQADLLLPLTADERSVVRGRRRTDCGREVLLQLPRDGALQPGDQLSDAAGTARVEVTAATEALLRVRATSALALMQAAYHLGNRHVALELHEQDLYLLEDAVLATMLESRGLQLSRCQRPFRPEGGAYAGHQHG.

This sequence belongs to the UreE family.

Its subcellular location is the cytoplasm. Involved in urease metallocenter assembly. Binds nickel. Probably functions as a nickel donor during metallocenter assembly. The polypeptide is Urease accessory protein UreE (Parasynechococcus marenigrum (strain WH8102)).